A 953-amino-acid chain; its full sequence is Xylosyltransferase 1 (953 aa).

Over 1–17 the chain is Cytoplasmic; sequence MVAAPCARRLARRSHSA. The helical; Signal-anchor for type II membrane protein transmembrane segment at 18 to 38 threads the bilayer; it reads LLAALMVLLLHTLVVWNFSSL. The Lumenal segment spans residues 39-953; the sequence is DSGAGEQRRA…GAVKPDGRLR (915 aa). Low complexity predominate over residues 48 to 62; it reads AGAAAGAAEQQQPAA. 2 disordered regions span residues 48 to 67 and 74 to 251; these read AGAA…RRER and LPAA…APKC. The span at 79 to 97 shows a compositional bias: gly residues; the sequence is GGPGGRAGGGGARGGGPGG. Residues 138 to 154 are compositionally biased toward basic and acidic residues; that stretch reads KVRTDSNNENSVPKDFE. A compositionally biased stretch (polar residues) spans 156 to 165; sequence VDNSNFAPRT. 2 stretches are compositionally biased toward basic and acidic residues: residues 170–197 and 205–216; these read HQPE…DKRQ and GPKEVLPPREKA. N-linked (GlcNAc...) asparagine glycosylation is present at Asn219. Disulfide bonds link Cys251–Cys279, Cys295–Cys536, Cys555–Cys568, and Cys557–Cys566. UDP-alpha-D-xylose is bound by residues Val327, Asp355, and 384 to 386; that span reads TIW. A glycan (N-linked (GlcNAc...) asparagine) is linked at Asn415. 488–489 is a binding site for UDP-alpha-D-xylose; the sequence is DW. UDP-alpha-D-xylose-binding positions include Ser569 and 592–593; that span reads RK. Disulfide bonds link Cys669/Cys921 and Cys914/Cys927. Asn771 is a glycosylation site (N-linked (GlcNAc...) asparagine). Residues 933–953 are disordered; it reads SSFSPDPKSELGAVKPDGRLR.

Belongs to the glycosyltransferase 14 family. XylT subfamily. In terms of assembly, monomer. A divalent metal cation serves as cofactor. Post-translationally, contains 7 disulfide bonds. N-glycosylated. Detected in brain, spleen, kidney and testis, and at low levels in skeletal muscle.

The protein resides in the golgi apparatus membrane. It carries out the reaction UDP-alpha-D-xylose + L-seryl-[protein] = 3-O-(beta-D-xylosyl)-L-seryl-[protein] + UDP + H(+). Its pathway is glycan metabolism; chondroitin sulfate biosynthesis. It functions in the pathway glycan metabolism; heparan sulfate biosynthesis. Its function is as follows. Catalyzes the first step in the biosynthesis of chondroitin sulfate and dermatan sulfate proteoglycans, such as DCN. Transfers D-xylose from UDP-D-xylose to specific serine residues of the core protein. Required for normal maturation of chondrocytes during bone development, normal onset of ossification and normal embryonic and postnatal skeleton development, especially of the long bones. This chain is Xylosyltransferase 1 (Xylt1), found in Mus musculus (Mouse).